Here is a 115-residue protein sequence, read N- to C-terminus: NADH-ubiquinone oxidoreductase chain 3 (115 aa).

Transmembrane regions (helical) follow at residues 3–23 (LFIMLTMSSITVSIVVALNLL), 55–75 (FFMVGILFLLFDLEIAILLPL), and 87–107 (TITWAIIIFLFLFIGLAYEWL).

Belongs to the complex I subunit 3 family.

The protein resides in the mitochondrion membrane. The enzyme catalyses a ubiquinone + NADH + 5 H(+)(in) = a ubiquinol + NAD(+) + 4 H(+)(out). Functionally, core subunit of the mitochondrial membrane respiratory chain NADH dehydrogenase (Complex I) that is believed to belong to the minimal assembly required for catalysis. Complex I functions in the transfer of electrons from NADH to the respiratory chain. The immediate electron acceptor for the enzyme is believed to be ubiquinone. This is NADH-ubiquinone oxidoreductase chain 3 (MT-ND3) from Alligator mississippiensis (American alligator).